The following is a 108-amino-acid chain: Circadian clock oscillator protein KaiB (108 aa).

The protein belongs to the KaiB family. In terms of assembly, undergoes a major conformational rearrangment; in the free state forms homotetramers with 2 dimers. When bound to the CI domain of KaiC, KaiA or CikA switches to a monomeric thioredoxin-fold (KaiB(fs)). The KaiABC complex composition changes during the circadian cycle to control KaiC phosphorylation. Complexes KaiC(6), KaiA(2-4):KaiC(6), KaiB(6):KaiC(6) and KaiC(6):KaiB(6):KaiA(12) are among the most important forms, many form cooperatively. Binds to KaiA; 1 KaiB(fs) binds to the KaiA homodimer. Binds to the B-loop in the CI domain of KaiC; SasA and KaiB compete to bind to the CI domain. Binding to KaiC CI domain occurs 1:1. KaiA and CikA bind to the same region of KaiB(fs) and therefore compete.

Its function is as follows. Key component of the KaiABC oscillator complex, which constitutes the main circadian regulator in cyanobacteria. Its composition changes during the circadian cycle to control KaiC phosphorylation. KaiA stimulates KaiC autophosphorylation, while KaiB sequesters KaiA, leading to KaiC autodephosphorylation. KaiA binding to KaiC yields KaiA(2-4):KaiC(6) complexes which stimulate KaiC autophosphorylation. Phospho-Ser-431 KaiC accumulation triggers binding of KaiB to form the KaiB(6):KaiC(6) complex, leading to changes in the output regulators CikA and SasA. KaiB switches to a thioredoxin-like fold (KaiB(fs)) in complex with KaiC. KaiB(6):KaiC(6) formation exposes a site for KaiA binding that sequesters KaiA from the CII domain, making the KaiC(6):KaiB(6):KaiA(12) complex that results in KaiC autodephosphorylation. Complete dephosphorylation of KaiC leads to dissociation of KaiA(2):KaiB(1), completing 1 cycle of the Kai oscillator. Functionally, a metamorphic protein which reversibly switches between an inactive tetrameric fold and a rare, thioredoxin-like monomeric fold (KaiB(fs)). KaiB(fs) binds phospho-KaiC, KaiA and CikA. KaiA and CikA compete for binding to KaiB(fs), and KaiB(fs) and SasA compete for binding to KaiC, thus the clock oscillator and output signal pathway are tightly coupled. This is Circadian clock oscillator protein KaiB from Thermosynechococcus vestitus (strain NIES-2133 / IAM M-273 / BP-1).